We begin with the raw amino-acid sequence, 249 residues long: Ubiquinone biosynthesis O-methyltransferase (249 aa).

Residues 1–23 (MTSPSQVLPASAGKPTGPNADPK) form a disordered region. Residues arginine 52, glycine 71, aspartate 92, and methionine 136 each coordinate S-adenosyl-L-methionine.

This sequence belongs to the methyltransferase superfamily. UbiG/COQ3 family.

It catalyses the reaction a 3-demethylubiquinol + S-adenosyl-L-methionine = a ubiquinol + S-adenosyl-L-homocysteine + H(+). The catalysed reaction is a 3-(all-trans-polyprenyl)benzene-1,2-diol + S-adenosyl-L-methionine = a 2-methoxy-6-(all-trans-polyprenyl)phenol + S-adenosyl-L-homocysteine + H(+). Its pathway is cofactor biosynthesis; ubiquinone biosynthesis. Functionally, O-methyltransferase that catalyzes the 2 O-methylation steps in the ubiquinone biosynthetic pathway. The sequence is that of Ubiquinone biosynthesis O-methyltransferase from Cupriavidus pinatubonensis (strain JMP 134 / LMG 1197) (Cupriavidus necator (strain JMP 134)).